A 166-amino-acid chain; its full sequence is Bacterial non-heme ferritin (166 aa).

Residues 2 to 145 enclose the Ferritin-like diiron domain; that stretch reads LSKNLLEALN…THINYLTRIG (144 aa). E17, E50, H53, E94, and Q127 together coordinate Fe cation.

It belongs to the ferritin family. Prokaryotic subfamily.

It is found in the cytoplasm. The catalysed reaction is 4 Fe(2+) + O2 + 6 H2O = 4 iron(III) oxide-hydroxide + 12 H(+). In terms of biological role, iron-storage protein. In Staphylococcus aureus (strain MRSA252), this protein is Bacterial non-heme ferritin (ftnA).